Reading from the N-terminus, the 716-residue chain is Polyribonucleotide nucleotidyltransferase (716 aa).

Positions 485 and 491 each coordinate Mg(2+). Residues 552–611 (PRFTTIKIDQDKIKDVIGKGGAVIRELTESTNTNIEIGDDGTIKVAASDQADADAAIEKI) form the KH domain. The S1 motif domain maps to 621–689 (GKIYQGKVAR…RQGRVRLSMK (69 aa)). The segment covering 689–698 (KEAAEKKEEP) has biased composition (basic and acidic residues). Positions 689–716 (KEAAEKKEEPAPEAPAEPAAEEENKSEE) are disordered. The segment covering 707 to 716 (AAEEENKSEE) has biased composition (acidic residues).

The protein belongs to the polyribonucleotide nucleotidyltransferase family. Component of the RNA degradosome, which is a multiprotein complex involved in RNA processing and mRNA degradation. It depends on Mg(2+) as a cofactor.

Its subcellular location is the cytoplasm. The catalysed reaction is RNA(n+1) + phosphate = RNA(n) + a ribonucleoside 5'-diphosphate. Functionally, involved in mRNA degradation. Catalyzes the phosphorolysis of single-stranded polyribonucleotides processively in the 3'- to 5'-direction. This is Polyribonucleotide nucleotidyltransferase from Idiomarina loihiensis (strain ATCC BAA-735 / DSM 15497 / L2-TR).